The chain runs to 579 residues: MKKLFLFFTLIFTAFAANSGLFDKKQTFLKVDDAFAFSATLSTDKSQLQAHWDIADGYYLYQDKISAELVGKSNPLSLHTQQAAELHQDPYFGEVKVFTHSIDGIFRGTFNNADDKVEITYQGCTEGFCYPPETKVLRIGDLAVSQEQIVEKTVEKNTALLSEQDRLADGLFHSKWAIFGFFVLGLGLAFTPCVLPMLPLLSAIVIGQQQRPNMMRAFSLAFLYVQGMALTYTLLGLAVAAIGLPFQIALQHPYVMIGLSILFVVLALSMFGLFTIQLPNSLQNKLNTWSQKQTSGAFGGAFAMGMIAGLVASPCTSAPLSGALLYVAQSGDLFTGAVTLYLLALGMGVPLMLITLFGNKILPKSGEWMNTVKQTFGFVMLALPVFLLSRILPEVWESRLWAGLATVFFIWFALQMSKNGFGYAIKIISFALAMVTVQPLQNWIWQTQTTTQSAVENMPVSQVKFKQIKNTEELDRTLAENPHSIAMLDLYADWCVACKEFEKLTFSDPQVQQQFQNILLLQVNMTKNSPENKALMERFNVMGLPTILFFDQQNNEIKGSRVTGFMDADAFSNWIEKLL.

The signal sequence occupies residues 1 to 16; sequence MKKLFLFFTLIFTAFA. 2 disulfide bridges follow: Cys124–Cys129 and Cys193–Cys315. A run of 8 helical transmembrane segments spans residues 178-198, 230-250, 254-274, 296-316, 337-357, 376-396, 397-417, and 420-440; these read IFGF…LPML, LTYT…QIAL, YVMI…FGLF, GAFG…SPCT, AVTL…ITLF, FGFV…PEVW, ESRL…LQMS, and GFGY…VQPL. In terms of domain architecture, Thioredoxin spans 449 to 579; the sequence is TTTQSAVENM…AFSNWIEKLL (131 aa). Cysteines 495 and 498 form a disulfide.

Belongs to the thioredoxin family. DsbD subfamily.

Its subcellular location is the cell inner membrane. The enzyme catalyses [protein]-dithiol + NAD(+) = [protein]-disulfide + NADH + H(+). It catalyses the reaction [protein]-dithiol + NADP(+) = [protein]-disulfide + NADPH + H(+). Functionally, required to facilitate the formation of correct disulfide bonds in some periplasmic proteins and for the assembly of the periplasmic c-type cytochromes. Acts by transferring electrons from cytoplasmic thioredoxin to the periplasm. This transfer involves a cascade of disulfide bond formation and reduction steps. This chain is Thiol:disulfide interchange protein DsbD, found in Haemophilus influenzae (strain PittGG).